We begin with the raw amino-acid sequence, 232 residues long: tRNA1(Val) (adenine(37)-N6)-methyltransferase (232 aa).

The protein belongs to the methyltransferase superfamily. tRNA (adenine-N(6)-)-methyltransferase family.

The protein localises to the cytoplasm. It catalyses the reaction adenosine(37) in tRNA1(Val) + S-adenosyl-L-methionine = N(6)-methyladenosine(37) in tRNA1(Val) + S-adenosyl-L-homocysteine + H(+). Specifically methylates the adenine in position 37 of tRNA(1)(Val) (anticodon cmo5UAC). The polypeptide is tRNA1(Val) (adenine(37)-N6)-methyltransferase (Haemophilus influenzae (strain ATCC 51907 / DSM 11121 / KW20 / Rd)).